The sequence spans 349 residues: uncharacterized protein (349 aa).

This is an uncharacterized protein from Escherichia coli (strain K12).